A 69-amino-acid chain; its full sequence is UPF0150 protein ssr1258 (69 aa).

This sequence belongs to the UPF0150 family.

The sequence is that of UPF0150 protein ssr1258 from Synechocystis sp. (strain ATCC 27184 / PCC 6803 / Kazusa).